Consider the following 408-residue polypeptide: Ribosomal RNA large subunit methyltransferase DR_0049 (408 aa).

The protein belongs to the methyltransferase superfamily.

It catalyses the reaction cytidine(2499) in 23S rRNA + S-adenosyl-L-methionine = 5-methylcytidine(2499) in 23S rRNA + S-adenosyl-L-homocysteine + H(+). Its function is as follows. Specifically methylates the cytosine at position 2499 (m5C2499) of 23S rRNA. This chain is Ribosomal RNA large subunit methyltransferase DR_0049, found in Deinococcus radiodurans (strain ATCC 13939 / DSM 20539 / JCM 16871 / CCUG 27074 / LMG 4051 / NBRC 15346 / NCIMB 9279 / VKM B-1422 / R1).